The following is a 96-amino-acid chain: uncharacterized protein (96 aa).

Residues proline 13–isoleucine 35 form a helical membrane-spanning segment.

The protein localises to the membrane. This is an uncharacterized protein from Archaeoglobus fulgidus (strain ATCC 49558 / DSM 4304 / JCM 9628 / NBRC 100126 / VC-16).